The primary structure comprises 224 residues: Cytidylate kinase (224 aa).

9 to 17 is an ATP binding site; that stretch reads GPSGVGKGT.

The protein belongs to the cytidylate kinase family. Type 1 subfamily.

It is found in the cytoplasm. The enzyme catalyses CMP + ATP = CDP + ADP. It catalyses the reaction dCMP + ATP = dCDP + ADP. The protein is Cytidylate kinase of Dichelobacter nodosus (strain VCS1703A).